The following is a 141-amino-acid chain: Large ribosomal subunit protein uL11 (141 aa).

Belongs to the universal ribosomal protein uL11 family. Part of the ribosomal stalk of the 50S ribosomal subunit. Interacts with L10 and the large rRNA to form the base of the stalk. L10 forms an elongated spine to which L12 dimers bind in a sequential fashion forming a multimeric L10(L12)X complex. In terms of processing, one or more lysine residues are methylated.

Forms part of the ribosomal stalk which helps the ribosome interact with GTP-bound translation factors. In Streptococcus sanguinis (strain SK36), this protein is Large ribosomal subunit protein uL11.